Consider the following 104-residue polypeptide: Evasin P1174 (104 aa).

A signal peptide spans 1–27 (LKTFCLFLQIAVFIALGIQIFLCGTDA). 3 disulfides stabilise this stretch: Cys-40-Cys-59, Cys-44-Cys-61, and Cys-55-Cys-72. 3 N-linked (GlcNAc...) asparagine glycosylation sites follow: Asn-43, Asn-49, and Asn-58. The segment at 85–104 (KPTSEEIADASPRPKETNSH) is disordered.

The protein localises to the secreted. Salivary chemokine-binding protein which binds to host chemokines CXCL1 and CXCL8. This chain is Evasin P1174, found in Ixodes ricinus (Common tick).